The following is a 594-amino-acid chain: Cytoplasmic polyadenylation element-binding protein 2 (594 aa).

Positions 72 to 90 are enriched in basic and acidic residues; sequence KEREKVDEEKEGVERREEN. Disordered regions lie at residues 72-91 and 367-388; these read KERE…EENG and GGGF…STSE. Residues 367–378 are compositionally biased toward gly residues; sequence GGGFNSGSGSGN. The 83-residue stretch at 458-540 folds into the RRM domain; that stretch reads LVAFIGGVPR…KRVEIKPYFF (83 aa).

Cytoplasmic polyadenylation element binding protein that binds to and regulates the translation of specific mRNAs. This Caenorhabditis japonica protein is Cytoplasmic polyadenylation element-binding protein 2 (cpb-2).